The following is a 221-amino-acid chain: Lipoprotein-releasing system ATP-binding protein LolD (221 aa).

The ABC transporter domain occupies 6–220 (LILKKISKHY…YNLKNGLLNI (215 aa)). 42–49 (GSSGSGKS) serves as a coordination point for ATP.

The protein belongs to the ABC transporter superfamily. Lipoprotein translocase (TC 3.A.1.125) family. As to quaternary structure, the complex is composed of two ATP-binding proteins (LolD) and two transmembrane proteins (LolC and LolE).

It is found in the cell inner membrane. Functionally, part of the ABC transporter complex LolCDE involved in the translocation of mature outer membrane-directed lipoproteins, from the inner membrane to the periplasmic chaperone, LolA. Responsible for the formation of the LolA-lipoprotein complex in an ATP-dependent manner. The protein is Lipoprotein-releasing system ATP-binding protein LolD of Rickettsia typhi (strain ATCC VR-144 / Wilmington).